The primary structure comprises 374 residues: tRNA N6-adenosine threonylcarbamoyltransferase (374 aa).

The Fe cation site is built by His-117 and His-121. Residues 140–144 (LVSGG), Asp-174, Gly-187, Asp-191, and Asn-283 contribute to the substrate site. Asp-311 is a Fe cation binding site. Residues 337 to 352 (ADSSLPVTEPHVPGQG) are compositionally biased toward low complexity. The tract at residues 337 to 374 (ADSSLPVTEPHVPGQGHPHGHPHGHDHVHEVSKENLYS) is disordered. Residues 359–374 (HGHDHVHEVSKENLYS) are compositionally biased toward basic and acidic residues.

Belongs to the KAE1 / TsaD family. It depends on Fe(2+) as a cofactor.

It localises to the cytoplasm. It catalyses the reaction L-threonylcarbamoyladenylate + adenosine(37) in tRNA = N(6)-L-threonylcarbamoyladenosine(37) in tRNA + AMP + H(+). Functionally, required for the formation of a threonylcarbamoyl group on adenosine at position 37 (t(6)A37) in tRNAs that read codons beginning with adenine. Is involved in the transfer of the threonylcarbamoyl moiety of threonylcarbamoyl-AMP (TC-AMP) to the N6 group of A37, together with TsaE and TsaB. TsaD likely plays a direct catalytic role in this reaction. The chain is tRNA N6-adenosine threonylcarbamoyltransferase from Streptomyces coelicolor (strain ATCC BAA-471 / A3(2) / M145).